A 94-amino-acid polypeptide reads, in one-letter code: Putative membrane protein insertion efficiency factor (94 aa).

It belongs to the UPF0161 family.

The protein localises to the cell inner membrane. In terms of biological role, could be involved in insertion of integral membrane proteins into the membrane. In Albidiferax ferrireducens (strain ATCC BAA-621 / DSM 15236 / T118) (Rhodoferax ferrireducens), this protein is Putative membrane protein insertion efficiency factor.